A 424-amino-acid polypeptide reads, in one-letter code: Glutamyl-tRNA reductase (424 aa).

Substrate contacts are provided by residues 49-52 (TCNR), Ser-108, 113-115 (EPQ), and Gln-119. Cys-50 (nucleophile) is an active-site residue. Residue 188 to 193 (GAGETI) coordinates NADP(+).

It belongs to the glutamyl-tRNA reductase family. In terms of assembly, homodimer.

The enzyme catalyses (S)-4-amino-5-oxopentanoate + tRNA(Glu) + NADP(+) = L-glutamyl-tRNA(Glu) + NADPH + H(+). Its pathway is porphyrin-containing compound metabolism; protoporphyrin-IX biosynthesis; 5-aminolevulinate from L-glutamyl-tRNA(Glu): step 1/2. In terms of biological role, catalyzes the NADPH-dependent reduction of glutamyl-tRNA(Glu) to glutamate 1-semialdehyde (GSA). The chain is Glutamyl-tRNA reductase from Hahella chejuensis (strain KCTC 2396).